A 304-amino-acid chain; its full sequence is Glycine--tRNA ligase alpha subunit (304 aa).

This sequence belongs to the class-II aminoacyl-tRNA synthetase family. Tetramer of two alpha and two beta subunits.

The protein localises to the cytoplasm. The catalysed reaction is tRNA(Gly) + glycine + ATP = glycyl-tRNA(Gly) + AMP + diphosphate. The protein is Glycine--tRNA ligase alpha subunit of Pectobacterium atrosepticum (strain SCRI 1043 / ATCC BAA-672) (Erwinia carotovora subsp. atroseptica).